A 321-amino-acid polypeptide reads, in one-letter code: Glycerol-3-phosphate dehydrogenase [NAD(P)+] (321 aa).

The NADPH site is built by Trp-15, Arg-35, and Lys-101. Lys-101 and Gly-129 together coordinate sn-glycerol 3-phosphate. Ala-133 lines the NADPH pocket. Lys-184, Asp-237, Ser-247, Arg-248, and Asn-249 together coordinate sn-glycerol 3-phosphate. Lys-184 acts as the Proton acceptor in catalysis. Arg-248 contributes to the NADPH binding site. Val-268 and Glu-270 together coordinate NADPH.

Belongs to the NAD-dependent glycerol-3-phosphate dehydrogenase family.

The protein localises to the cytoplasm. It catalyses the reaction sn-glycerol 3-phosphate + NAD(+) = dihydroxyacetone phosphate + NADH + H(+). The enzyme catalyses sn-glycerol 3-phosphate + NADP(+) = dihydroxyacetone phosphate + NADPH + H(+). It functions in the pathway membrane lipid metabolism; glycerophospholipid metabolism. Functionally, catalyzes the reduction of the glycolytic intermediate dihydroxyacetone phosphate (DHAP) to sn-glycerol 3-phosphate (G3P), the key precursor for phospholipid synthesis. The sequence is that of Glycerol-3-phosphate dehydrogenase [NAD(P)+] from Acidiphilium cryptum (strain JF-5).